Reading from the N-terminus, the 327-residue chain is Ankyrin repeat domain-containing protein SOWAHD (327 aa).

The disordered stretch occupies residues 1–31 (MAQALEDGNPLPKASNRPAESEAPSDPQIKD). 3 ANK repeats span residues 112–141 (CLEPREHAWILAAAECRFEVLLEMLEAEPS), 147–162 (DPITGYSVLHWLAKHG), and 186–216 (PGSGGLTPLHLAALQGHDMVIKVLVGALGAD). A disordered region spans residues 251-311 (ERDRKRENAN…EKKASSTQEG (61 aa)). A compositionally biased stretch (low complexity) spans 260–275 (NNNSSRTTTTTTTTSR). Residues 292–305 (HYKEASQPVKEKKA) are compositionally biased toward basic and acidic residues.

Belongs to the SOWAH family.

The polypeptide is Ankyrin repeat domain-containing protein SOWAHD (Sowahd) (Mus musculus (Mouse)).